The primary structure comprises 406 residues: Transposase for insertion sequence element IS1001 (406 aa).

The protein belongs to the transposase 12 family.

Involved in the transposition of the insertion sequence. This is Transposase for insertion sequence element IS1001 (tnpA) from Bordetella parapertussis.